A 370-amino-acid chain; its full sequence is Glutamate 5-kinase (370 aa).

Position 17 (lysine 17) interacts with ATP. Substrate-binding residues include serine 56, aspartate 143, and asparagine 155. An ATP-binding site is contributed by serine 175 to aspartate 176. Residues lysine 280–proline 357 form the PUA domain.

Belongs to the glutamate 5-kinase family.

Its subcellular location is the cytoplasm. The catalysed reaction is L-glutamate + ATP = L-glutamyl 5-phosphate + ADP. It functions in the pathway amino-acid biosynthesis; L-proline biosynthesis; L-glutamate 5-semialdehyde from L-glutamate: step 1/2. Its function is as follows. Catalyzes the transfer of a phosphate group to glutamate to form L-glutamate 5-phosphate. This Paracoccus denitrificans (strain Pd 1222) protein is Glutamate 5-kinase.